Reading from the N-terminus, the 445-residue chain is MGESIPLAAPVPVEQAVLETFFSHLGIFSYDKAKDNVEKEREANKSAGGSWLSLLAALAHLAAAEKVYHSLTYLGQKLGGQSFFSRKDSIRTIYTSLHNELKKVVTGRGALGGTAPHVEELLSHLSEQLCFFVQARMEIADFYEKMYTLSTQKFINAEELVGLLDAIMKKYSSRFHHPILSPLESSFQLEVDVLCHLLKAQAQVSEWKFLPSLVNLHSAHTKLQTWGQIFEKQRETKKHLFGGQSQKAVQPPHLFLWLMKLKNMLLAKFSFYFHEALSRQTTASEMKTLTAKANPDFFGKISSFIRKYDAANVSLIFDNRGSESFQGHGYHHPHSYREAPKGVDQYPAVVSLPSDRPVMHWPNVIMIMTDRTSDLNSLEKVVHFYDDKVQSTYFLTRPEPHFTIVIIFESKKSERDSHFISFLNEVSLALKNPKVFASLKPGAKG.

This sequence belongs to the KICS2 family. In terms of assembly, part of the KICSTOR complex composed of KPTN, ITFG2, KICS2 and SZT2. SZT2 probably serves as a link between the other three proteins in the KICSTOR complex and may mediate the direct interaction with the GATOR complex via GATOR1. The KICSTOR complex interacts directly with the GATOR1 complex and most probably indirectly with the GATOR2 complex in an amino acid-independent manner.

It localises to the lysosome membrane. Its function is as follows. As part of the KICSTOR complex functions in the amino acid-sensing branch of the TORC1 signaling pathway. Recruits, in an amino acid-independent manner, the GATOR1 complex to the lysosomal membranes and allows its interaction with GATOR2 and the RAG GTPases. Functions upstream of the RAG GTPases and is required to negatively regulate mTORC1 signaling in absence of amino acids. In absence of the KICSTOR complex mTORC1 is constitutively localized to the lysosome and activated. The KICSTOR complex is also probably involved in the regulation of mTORC1 by glucose. In Homo sapiens (Human), this protein is KICSTOR subunit 2.